The chain runs to 427 residues: Glutamate-1-semialdehyde 2,1-aminomutase (427 aa).

Lys265 carries the post-translational modification N6-(pyridoxal phosphate)lysine.

Belongs to the class-III pyridoxal-phosphate-dependent aminotransferase family. HemL subfamily. As to quaternary structure, homodimer. Pyridoxal 5'-phosphate serves as cofactor.

It is found in the cytoplasm. It catalyses the reaction (S)-4-amino-5-oxopentanoate = 5-aminolevulinate. Its pathway is porphyrin-containing compound metabolism; protoporphyrin-IX biosynthesis; 5-aminolevulinate from L-glutamyl-tRNA(Glu): step 2/2. The protein is Glutamate-1-semialdehyde 2,1-aminomutase of Neisseria meningitidis serogroup C / serotype 2a (strain ATCC 700532 / DSM 15464 / FAM18).